Consider the following 1146-residue polypeptide: Lysine-specific demethylase 2A (1146 aa).

The JmjC domain occupies 146–314; sequence FSHTKLENLV…MQLRIYSIED (169 aa). Position 207 (Thr207) interacts with substrate. Residues His210 and Asp212 each coordinate Fe cation. A substrate-binding site is contributed by Lys227. Residue His282 coordinates Fe cation. Disordered regions lie at residues 363–467 and 554–585; these read LNGR…PDSP and TKPH…SSGA. The span at 373–387 shows a compositional bias: low complexity; that stretch reads SSSSSSSSSGLSSSS. The span at 388 to 401 shows a compositional bias: acidic residues; sequence DNDDSSDQDWEEEE. Positions 402 to 442 are enriched in basic and acidic residues; sequence GLRKRERDRCRVERELQRKRNRDRQQRDQERDRHGRTERII. A compositionally biased stretch (pro residues) spans 453–467; sequence LTPPPSLPLPTPDSP. The segment covering 566-584 has biased composition (low complexity); it reads STAPPRTSGTPSGTTASSG. Residues 585-631 form a CXXC-type zinc finger; it reads ARRRRVRCRKCQACVQRECGTCHYCKDMKKFGGPGRMKQSCVLRQCL. Zn(2+) is bound by residues Cys592, Cys595, Cys598, Cys603, Cys606, Cys609, Cys625, and Cys630. The PHD-type zinc finger occupies 638–699; that stretch reads SVTCALCGEV…YWECPKCYEG (62 aa). Disordered regions lie at residues 733 to 800 and 832 to 867; these read VLRP…EGDR and TPNP…ENVM. A compositionally biased stretch (pro residues) spans 739 to 762; it reads GQSPPSPPLLLLPPSPSSAPPTPP. The segment covering 772 to 789 has biased composition (basic and acidic residues); it reads SREERAKRRQLAREKENH. Residues 849–864 are compositionally biased toward acidic residues; sequence EREEEEEEEEEEEETE. Residues 874–919 enclose the F-box domain; that stretch reads STSMQKDVWLSVFHYLTHEELCICMRVCKAWYKWGCDKRLWSRIDV. LRR repeat units follow at residues 945 to 966, 968 to 994, 1032 to 1057, 1058 to 1087, 1088 to 1112, and 1113 to 1138; these read WTNV…LKDL, LAGC…DLRW, GLDI…DLSH, CPLL…HLAG, CKGV…DLHG, and CKQV…CLSD.

The protein belongs to the JHDM1 histone demethylase family. Fe(2+) is required as a cofactor.

It localises to the nucleus. The protein resides in the nucleoplasm. The enzyme catalyses N(6),N(6)-dimethyl-L-lysyl(36)-[histone H3] + 2 2-oxoglutarate + 2 O2 = L-lysyl(36)-[histone H3] + 2 formaldehyde + 2 succinate + 2 CO2. Its function is as follows. Histone demethylase that specifically demethylates 'Lys-36' of histone H3, thereby playing a central role in histone code. Preferentially demethylates dimethylated H3 'Lys-36' residue while it has weak or no activity for mono- and tri-methylated H3 'Lys-36'. May also recognize and bind to some phosphorylated proteins and promote their ubiquitination and degradation. Required to maintain the heterochromatic state. Associates with centromeres and represses transcription of small non-coding RNAs that are encoded by the clusters of satellite repeats at the centromere. Required to sustain centromeric integrity and genomic stability, particularly during mitosis. May play a role in the regulation of circadian gene expression. The sequence is that of Lysine-specific demethylase 2A (kdm2a) from Xenopus tropicalis (Western clawed frog).